The primary structure comprises 254 residues: 3-deoxy-manno-octulosonate cytidylyltransferase (254 aa).

This sequence belongs to the KdsB family.

The protein resides in the cytoplasm. The catalysed reaction is 3-deoxy-alpha-D-manno-oct-2-ulosonate + CTP = CMP-3-deoxy-beta-D-manno-octulosonate + diphosphate. Its pathway is nucleotide-sugar biosynthesis; CMP-3-deoxy-D-manno-octulosonate biosynthesis; CMP-3-deoxy-D-manno-octulosonate from 3-deoxy-D-manno-octulosonate and CTP: step 1/1. It participates in bacterial outer membrane biogenesis; lipopolysaccharide biosynthesis. Activates KDO (a required 8-carbon sugar) for incorporation into bacterial lipopolysaccharide in Gram-negative bacteria. In Haemophilus influenzae (strain 86-028NP), this protein is 3-deoxy-manno-octulosonate cytidylyltransferase.